The following is a 140-amino-acid chain: MLTIEDIKKIIPHRYPFLLIDRLEELEDGKRAVGIKNVTVNEDFFNGHFPDYPVMPGVLIVEALAQVGACAILNVEENKGKLAFFAGIDNCRFKEQVKPGDQLRLEVEIVRMKGPVGKGRGVASVNGKTVAETDLMFAIK.

His-48 is a catalytic residue.

It belongs to the thioester dehydratase family. FabZ subfamily.

It localises to the cytoplasm. It carries out the reaction a (3R)-hydroxyacyl-[ACP] = a (2E)-enoyl-[ACP] + H2O. Involved in unsaturated fatty acids biosynthesis. Catalyzes the dehydration of short chain beta-hydroxyacyl-ACPs and long chain saturated and unsaturated beta-hydroxyacyl-ACPs. The protein is 3-hydroxyacyl-[acyl-carrier-protein] dehydratase FabZ of Halalkalibacterium halodurans (strain ATCC BAA-125 / DSM 18197 / FERM 7344 / JCM 9153 / C-125) (Bacillus halodurans).